We begin with the raw amino-acid sequence, 315 residues long: GPN-loop GTPase 2 homolog (315 aa).

12-17 (GSGKTV) is a binding site for GTP. Positions 69–71 (GPN) match the Gly-Pro-Asn (GPN)-loop; involved in dimer interface motif. Position 171–174 (171–174 (SKMD)) interacts with GTP.

It belongs to the GPN-loop GTPase family. In terms of assembly, heterodimers with gpn1 or gpn3. Binds to RNA polymerase II (RNAPII).

Small GTPase required for proper localization of RNA polymerase II and III (RNAPII and RNAPIII). May act at an RNAP assembly step prior to nuclear import. This Dictyostelium discoideum (Social amoeba) protein is GPN-loop GTPase 2 homolog (gpn2).